The primary structure comprises 179 residues: Diphosphoinositol polyphosphate phosphohydrolase 2 (179 aa).

Substrate is bound by residues Arg-9, 17–19, and 38–40; these read KKR and SSR. Positions 17 to 143 constitute a Nudix hydrolase domain; the sequence is KKRAACLCFR…VHAEYLEKLK (127 aa). Mg(2+) contacts are provided by Gly-49 and Glu-65. A Nudix box motif is present at residues 50 to 71; the sequence is GGMEPEEEPGGAAVREVYEEAG. The Proton acceptor role is filled by Glu-68. Glu-69 is a Mg(2+) binding site. Substrate-binding positions include 88–90, Arg-114, and Lys-132; that span reads RKH.

Belongs to the Nudix hydrolase family. DIPP subfamily. Mg(2+) is required as a cofactor. The cofactor is Mn(2+).

The protein localises to the cytoplasm. It carries out the reaction diphospho-myo-inositol polyphosphate + H2O = myo-inositol polyphosphate + phosphate.. The enzyme catalyses 5-diphospho-1D-myo-inositol 1,2,3,4,6-pentakisphosphate + H2O = 1D-myo-inositol hexakisphosphate + phosphate + H(+). The catalysed reaction is 3,5-bis(diphospho)-1D-myo-inositol 1,2,4,6-tetrakisphosphate + H2O = 3-diphospho-1D-myo-inositol 1,2,4,5,6-pentakisphosphate + phosphate + 2 H(+). It catalyses the reaction 5-diphospho-1D-myo-inositol 1,3,4,6-tetrakisphosphate + H2O = 1D-myo-inositol 1,3,4,5,6-pentakisphosphate + phosphate + H(+). It carries out the reaction P(1),P(6)-bis(5'-adenosyl) hexaphosphate + H2O = 2 ATP + 2 H(+). The enzyme catalyses P(1),P(5)-bis(5'-adenosyl) pentaphosphate + H2O = ADP + ATP + 2 H(+). The catalysed reaction is 5-phospho-alpha-D-ribose 1-diphosphate + H2O = alpha-D-ribose 1,5-bisphosphate + phosphate + H(+). Functionally, cleaves the beta-phosphate from diphosphoinositol polyphosphates such as PP-InsP5 (diphosphoinositol pentakisphosphate), PP-InsP4 (diphosphoinositol tetrakisphosphate) and [PP]2-InsP4 (bisdiphosphoinositol tetrakisphosphate), suggesting that it may play a role in signal transduction. Diadenosine polyphosphates, particularly Ap6A (P(1),P(6)-bis(5a-adenosyl) hexaphosphate) and Ap5A (P(1),P(5)-bis(5'-adenosyl) pentaphosphate) are downstream effectors of a signaling cascade that regulates cardiac KATP channels, can also be substrates, although with lower preference than the diphosphoinositol polyphosphates. Can also catalyze the hydrolysis of 5-phosphoribose 1-diphosphate, generating the glycolytic activator ribose 1,5-bisphosphate. Does not play a role in U8 snoRNA decapping activity. Binds U8 snoRNA. The polypeptide is Diphosphoinositol polyphosphate phosphohydrolase 2 (Mus musculus (Mouse)).